Reading from the N-terminus, the 482-residue chain is MKFIIKLFPEITIKSQSVRLRFIKILAGNIRNVLKHYDETLAVVRHWDNIEVRAKDENQRLAIRDALTRIPGIHHILEVEDVPFTDMHDIFEKALAQYREQLEGKTFCVRVKRRGKHEFSSIEVERYVGGGLNQHIESARVKLANPDVTVHLEVEDDRLLLIKGRYEGIGGFPIGTQEDVLSLISGGFDSGVSSYMLMRRGCRVHYCFFNLGGAAHEIGVRQVAHYLWNRFGSSHRVRFVAINFEPVVGEILEKVDDGQMGVVLKRMMVRAASKVAERYGVQALVTGEALGQVSSQTLTNLRLIDNVSDTLILRPLISYDKEHIINLARQIGTEDFARTMPEYCGVISKSPTVKAIKAKIEAEEENFDFSILDKVVEEANNVDIREIAQQTQQEVVEVETVSGFGANDVILDIRSIDEQDDKPLKVEGIDVVSLPFYKLSTKFGDLDQSKTWLLWCERGVMSRLQALYLREQGFANVKVYRP.

One can recognise a THUMP domain in the interval 61–165 (LAIRDALTRI…DDRLLLIKGR (105 aa)). ATP is bound by residues 183 to 184 (LI), lysine 265, glycine 287, and glutamine 296. An intrachain disulfide couples cysteine 344 to cysteine 456. Positions 404–482 (FGANDVILDI…GFANVKVYRP (79 aa)) constitute a Rhodanese domain. The active-site Cysteine persulfide intermediate is cysteine 456.

It belongs to the ThiI family.

It localises to the cytoplasm. It catalyses the reaction [ThiI sulfur-carrier protein]-S-sulfanyl-L-cysteine + a uridine in tRNA + 2 reduced [2Fe-2S]-[ferredoxin] + ATP + H(+) = [ThiI sulfur-carrier protein]-L-cysteine + a 4-thiouridine in tRNA + 2 oxidized [2Fe-2S]-[ferredoxin] + AMP + diphosphate. The enzyme catalyses [ThiS sulfur-carrier protein]-C-terminal Gly-Gly-AMP + S-sulfanyl-L-cysteinyl-[cysteine desulfurase] + AH2 = [ThiS sulfur-carrier protein]-C-terminal-Gly-aminoethanethioate + L-cysteinyl-[cysteine desulfurase] + A + AMP + 2 H(+). The protein operates within cofactor biosynthesis; thiamine diphosphate biosynthesis. Its function is as follows. Catalyzes the ATP-dependent transfer of a sulfur to tRNA to produce 4-thiouridine in position 8 of tRNAs, which functions as a near-UV photosensor. Also catalyzes the transfer of sulfur to the sulfur carrier protein ThiS, forming ThiS-thiocarboxylate. This is a step in the synthesis of thiazole, in the thiamine biosynthesis pathway. The sulfur is donated as persulfide by IscS. The protein is tRNA sulfurtransferase of Salmonella arizonae (strain ATCC BAA-731 / CDC346-86 / RSK2980).